Reading from the N-terminus, the 511-residue chain is Probable cytochrome P450 4d21 (511 aa).

Cysteine 456 provides a ligand contact to heme.

Belongs to the cytochrome P450 family. Requires heme as cofactor.

It is found in the endoplasmic reticulum membrane. Its subcellular location is the microsome membrane. In terms of biological role, may be involved in the metabolism of insect hormones and in the breakdown of synthetic insecticides. The protein is Probable cytochrome P450 4d21 (Cyp4d21) of Drosophila melanogaster (Fruit fly).